A 330-amino-acid polypeptide reads, in one-letter code: Putative aminopeptidase (330 aa).

H65 and D168 together coordinate a divalent metal cation. The active-site Proton acceptor is E198. Residues E199, D221, and H307 each contribute to the a divalent metal cation site.

Belongs to the peptidase M42 family. Requires a divalent metal cation as cofactor.

In Acetivibrio thermocellus (Hungateiclostridium thermocellum), this protein is Putative aminopeptidase (celM).